Consider the following 549-residue polypeptide: Cation/acetate symporter ActP (549 aa).

13 helical membrane passes run 33–53 (WQAI…TYWA), 77–97 (LAIA…ALVF), 103–123 (GLIY…LIAE), 148–168 (ILSA…QMVG), 183–203 (IAVV…GMLA), 206–226 (WVQI…AFMV), 262–282 (ISAL…PHIL), 303–323 (GFMG…IMLV), 355–375 (LFLG…VAGL), 404–424 (VSKI…VLFE), 428–448 (IAFM…PIIL), 464–484 (GGWL…TIWV), and 493–513 (IFPY…GIWF).

Belongs to the sodium:solute symporter (SSF) (TC 2.A.21) family.

The protein resides in the cell inner membrane. Its function is as follows. Transports acetate. The chain is Cation/acetate symporter ActP from Citrobacter koseri (strain ATCC BAA-895 / CDC 4225-83 / SGSC4696).